We begin with the raw amino-acid sequence, 293 residues long: NAD kinase (293 aa).

The active-site Proton acceptor is the aspartate 74. NAD(+)-binding positions include 74-75 (DG), 148-149 (NE), histidine 159, arginine 176, aspartate 178, threonine 186, 189-194 (TAYSLS), and glutamine 248.

It belongs to the NAD kinase family. Homodimer. The cofactor is a divalent metal cation.

It localises to the cytoplasm. It carries out the reaction NAD(+) + ATP = ADP + NADP(+) + H(+). In terms of biological role, involved in the regulation of the intracellular balance of NAD and NADP, and is a key enzyme in the biosynthesis of NADP. Catalyzes specifically the phosphorylation on 2'-hydroxyl of the adenosine moiety of NAD to yield NADP. This Yersinia pestis protein is NAD kinase.